We begin with the raw amino-acid sequence, 440 residues long: Histidinol dehydrogenase (440 aa).

Residues Tyr-139, Gln-201, and Asn-224 each contribute to the NAD(+) site. The substrate site is built by Ser-247, Gln-269, and His-272. Residues Gln-269 and His-272 each contribute to the Zn(2+) site. Active-site proton acceptor residues include Glu-337 and His-338. The substrate site is built by His-338, Asp-371, Glu-425, and His-430. Asp-371 contacts Zn(2+). His-430 is a binding site for Zn(2+).

This sequence belongs to the histidinol dehydrogenase family. The cofactor is Zn(2+).

It carries out the reaction L-histidinol + 2 NAD(+) + H2O = L-histidine + 2 NADH + 3 H(+). It participates in amino-acid biosynthesis; L-histidine biosynthesis; L-histidine from 5-phospho-alpha-D-ribose 1-diphosphate: step 9/9. In terms of biological role, catalyzes the sequential NAD-dependent oxidations of L-histidinol to L-histidinaldehyde and then to L-histidine. This Prochlorococcus marinus (strain MIT 9312) protein is Histidinol dehydrogenase.